Consider the following 416-residue polypeptide: UDP-N-acetylmuramoylalanine--D-glutamate ligase (416 aa).

104 to 110 provides a ligand contact to ATP; the sequence is GSNGKST.

The protein belongs to the MurCDEF family.

The protein localises to the cytoplasm. It catalyses the reaction UDP-N-acetyl-alpha-D-muramoyl-L-alanine + D-glutamate + ATP = UDP-N-acetyl-alpha-D-muramoyl-L-alanyl-D-glutamate + ADP + phosphate + H(+). It functions in the pathway cell wall biogenesis; peptidoglycan biosynthesis. In terms of biological role, cell wall formation. Catalyzes the addition of glutamate to the nucleotide precursor UDP-N-acetylmuramoyl-L-alanine (UMA). This is UDP-N-acetylmuramoylalanine--D-glutamate ligase from Francisella tularensis subsp. holarctica (strain FTNF002-00 / FTA).